The following is a 185-amino-acid chain: Elongation factor P (185 aa).

This sequence belongs to the elongation factor P family.

Its subcellular location is the cytoplasm. Its pathway is protein biosynthesis; polypeptide chain elongation. Functionally, involved in peptide bond synthesis. Stimulates efficient translation and peptide-bond synthesis on native or reconstituted 70S ribosomes in vitro. Probably functions indirectly by altering the affinity of the ribosome for aminoacyl-tRNA, thus increasing their reactivity as acceptors for peptidyl transferase. The protein is Elongation factor P of Bacillus cereus (strain 03BB102).